The chain runs to 64 residues: NPSSPPVVDTTNTTSYPPMCSQDAVGGQVLENIPLQEDCLYNFNTVPYIVGIIPEDIIPVAIEK.

The protein belongs to the type-B carboxylesterase/lipase family. Monomer and homotrimer.

The protein localises to the microsome. The protein resides in the endoplasmic reticulum. The catalysed reaction is hexadecanoyl-CoA + H2O = hexadecanoate + CoA + H(+). Its function is as follows. Hydrolysis of a variety of CoA thioesters of long-chain fatty acids. This chain is Palmitoyl-CoA hydrolase, found in Rattus norvegicus (Rat).